Reading from the N-terminus, the 419-residue chain is MEAENGEGQVQVHLKTKQEHYAVPDVPYAIDGSVSTTELNIFLNALLQSKGAEGVDFDFLVFDEYLRGRLCDHLREKAISFEDAIDIEYVERFPAPEPQDCLLHDDWVSAVKACGKWILTGCYDNTINIWTNKGKHKLTIPGHTAPIKAVDWISMDDENGRFVSTSQDQTAMLWQWNIASNAVECVSVCKGHERGVDSVCVSPDAQRFATGSWDTMLKIWSAGLDDTSEGTAKRVKESGVRTPKMTLQGHRESISAVQWMDATTLVTGSWDHTLKVWDLQLEGIKTEISTNKSIFDASYSKLNRLIVTASADKNLRLYDARTNQGSVVRNTYLGHNAWVQTVMWSNTEEFLFVSGSYDTQNKLWDCRSPKAPLYDLLGHGEKVLDIDWSNPKYIVSGGADNTVRVFKSGKATIENMETK.

Residues 10–91 (VQVHLKTKQE…EDAIDIEYVE (82 aa)) are ubiquitin-like (UBL) domain. WD repeat units follow at residues 103–140 (LHDDWVSAVKACGKWILTGCYDNTINIWTNKGKHKLTI), 142–184 (GHTA…NAVE), 191–230 (GHERGVDSVCVSPDAQRFATGSWDTMLKIWSAGLDDTSEG), 249–287 (GHRESISAVQWMDATTLVTGSWDHTLKVWDLQLEGIKTE), 289–328 (STNKSIFDASYSKLNRLIVTASADKNLRLYDARTNQGSVV), 334–374 (GHNA…APLY), and 378–416 (GHGEKVLDIDWSNPKYIVSGGADNTVRVFKSGKATIENM).

This sequence belongs to the WD repeat WDR12/YTM1 family.

It localises to the nucleus. The protein localises to the nucleolus. The protein resides in the nucleoplasm. Its function is as follows. Required for maturation of ribosomal RNAs and formation of the large ribosomal subunit. The chain is Ribosome biogenesis protein WDR12 homolog from Drosophila virilis (Fruit fly).